Reading from the N-terminus, the 757-residue chain is Xaa-Pro dipeptidyl-peptidase (757 aa).

Active-site charge relay system residues include Ser348, Asp468, and His498.

Belongs to the peptidase S15 family. As to quaternary structure, homodimer.

It is found in the cytoplasm. It catalyses the reaction Hydrolyzes Xaa-Pro-|- bonds to release unblocked, N-terminal dipeptides from substrates including Ala-Pro-|-p-nitroanilide and (sequentially) Tyr-Pro-|-Phe-Pro-|-Gly-Pro-|-Ile.. In terms of biological role, removes N-terminal dipeptides sequentially from polypeptides having unsubstituted N-termini provided that the penultimate residue is proline. The polypeptide is Xaa-Pro dipeptidyl-peptidase (Streptococcus pneumoniae (strain Hungary19A-6)).